A 558-amino-acid chain; its full sequence is Phosphatidylserine lipase ABHD16A (558 aa).

2 helical membrane-spanning segments follow: residues 60-80 and 93-113; these read ILALASVFWSISYYSSPFAFF and VVPFSHYAGTLLVLLAGVACL. Topologically, residues 114–558 are cytoplasmic; it reads RGIGRWTNPQ…AQHFQMPWCL (445 aa). The 127-residue stretch at 281 to 407 folds into the AB hydrolase-1 domain; it reads LVICCEGNAG…LVTRTVRQHL (127 aa). Active-site charge relay system residues include Ser-355, Asp-430, and His-507.

It belongs to the AB hydrolase superfamily. ABHD16 family.

The protein resides in the membrane. The catalysed reaction is 1-heptadecanoyl-2-(5Z,8Z,11Z,14Z-eicosatetraenoyl)-sn-glycero-3-phosphoserine + H2O = 1-heptadecanoyl-sn-glycero-3-phosphoserine + (5Z,8Z,11Z,14Z)-eicosatetraenoate + H(+). It carries out the reaction 1-hexadecanoyl-2-(9Z-octadecenoyl)-sn-glycero-3-phospho-L-serine + H2O = 1-hexadecanoyl-sn-glycero-3-phospho-L-serine + (9Z)-octadecenoate + H(+). It catalyses the reaction 1-octadecanoyl-2-(9Z,12Z-octadecadienoyl)-sn-glycero-3-phosphoserine + H2O = 1-octadecanoyl-sn-glycero-3-phosphoserine + (9Z,12Z)-octadecadienoate + H(+). The enzyme catalyses 1-heptadecanoyl-2-(5Z,8Z,11Z,14Z-eicosatetraenoyl)-sn-glycero-3-phosphocholine + H2O = 1-heptadecanoyl-sn-glycero-3-phosphocholine + (5Z,8Z,11Z,14Z)-eicosatetraenoate + H(+). The catalysed reaction is 1-hexadecanoyl-2-(9Z-octadecenoyl)-sn-glycero-3-phosphoglycerol + H2O = 1-hexadecanoyl-sn-glycero-3-phosphoglycerol + (9Z)-octadecenoate + H(+). It carries out the reaction 1-hexadecanoyl-2-(9Z-octadecenoyl)-sn-glycero-3-phospho-(1D-myo-inositol) + H2O = 1-hexadecanoyl-sn-glycero-3-phospho-(1D-myo-inositol) + (9Z)-octadecenoate + H(+). It catalyses the reaction 1-heptadecanoyl-2-(5Z,8Z,11Z,14Z-eicosatetraenoyl)-sn-glycero-3-phosphoethanolamine + H2O = 1-heptadecanoyl-sn-glycero-3-phosphoethanolamine + (5Z,8Z,11Z,14Z)-eicosatetraenoate + H(+). The enzyme catalyses 1-hexadecanoyl-2-(9Z-octadecenoyl)-sn-glycero-3-phospho-(1'-sn-glycerol) + H2O = 1-hexadecanoyl-sn-glycero-3-phospho-(1'-sn-glycerol) + (9Z)-octadecenoate + H(+). The catalysed reaction is Hydrolyzes glycerol monoesters of long-chain fatty acids.. It carries out the reaction 1-tetradecanoylglycerol + H2O = tetradecanoate + glycerol + H(+). It catalyses the reaction 2-hexadecanoylglycerol + H2O = glycerol + hexadecanoate + H(+). The enzyme catalyses 1-(9Z-octadecenoyl)-glycerol + H2O = glycerol + (9Z)-octadecenoate + H(+). The catalysed reaction is 2-(9Z-octadecenoyl)-glycerol + H2O = glycerol + (9Z)-octadecenoate + H(+). It carries out the reaction 2-(9Z,12Z-octadecadienoyl)-glycerol + H2O = (9Z,12Z)-octadecadienoate + glycerol + H(+). It catalyses the reaction 1-(5Z,8Z,11Z,14Z-eicosatetraenoyl)-glycerol + H2O = glycerol + (5Z,8Z,11Z,14Z)-eicosatetraenoate + H(+). The enzyme catalyses 2-(5Z,8Z,11Z,14Z-eicosatetraenoyl)-glycerol + H2O = glycerol + (5Z,8Z,11Z,14Z)-eicosatetraenoate + H(+). The catalysed reaction is prostaglandin D2-1-glycerol ester + H2O = prostaglandin D2 + glycerol + H(+). It carries out the reaction 2-glyceryl-15-deoxy-Delta(12,14)-prostaglandin J2 + H2O = 15-deoxy-Delta(12,14)-prostaglandin J2 + glycerol + H(+). It catalyses the reaction 1-(9Z,12Z-octadecadienoyl)-glycerol + H2O = (9Z,12Z)-octadecadienoate + glycerol + H(+). In terms of biological role, phosphatidylserine (PS) lipase that mediates the hydrolysis of phosphatidylserine to generate lysophosphatidylserine (LPS). LPS constitutes a class of signaling lipids that regulates immunological and neurological processes. Has no activity towards diacylglycerol, triacylglycerol or lysophosphatidylserine lipase. Also has monoacylglycerol lipase activity, with preference for 1-(9Z,12Z-octadecadienoyl)-glycerol (1-LG) and 2-glyceryl-15-deoxy-Delta(12,14)-prostaglandin J2 (15d-PGJ(2)-G). The chain is Phosphatidylserine lipase ABHD16A from Rattus norvegicus (Rat).